The primary structure comprises 342 residues: N-acetyl-gamma-glutamyl-phosphate reductase (342 aa).

Residue Cys-149 is part of the active site.

This sequence belongs to the NAGSA dehydrogenase family. Type 1 subfamily.

It localises to the cytoplasm. The catalysed reaction is N-acetyl-L-glutamate 5-semialdehyde + phosphate + NADP(+) = N-acetyl-L-glutamyl 5-phosphate + NADPH + H(+). It participates in amino-acid biosynthesis; L-arginine biosynthesis; N(2)-acetyl-L-ornithine from L-glutamate: step 3/4. Catalyzes the NADPH-dependent reduction of N-acetyl-5-glutamyl phosphate to yield N-acetyl-L-glutamate 5-semialdehyde. In Thiobacillus denitrificans (strain ATCC 25259 / T1), this protein is N-acetyl-gamma-glutamyl-phosphate reductase.